An 85-amino-acid chain; its full sequence is COMM domain-containing protein 6 (85 aa).

The residue at position 1 (Met1) is an N-acetylmethionine. In terms of domain architecture, COMM spans 18-85; sequence QLIDFEWKLG…KEIAAIIETV (68 aa).

This sequence belongs to the COMM domain-containing protein 6 family. In terms of assembly, component of the commander complex consisting of the CCC subcomplex and the retriever subcomplex. Component of the CCC (COMMD/CCDC22/CCDC93) subcomplex consisting of COMMD1, COMMD2, COMMD3, COMMD4, COMMD5, COMMD6, COMMD7, COMMD8, COMMD9, COMMD10, CCDC22 and CCDC93; within the complex forms a heterodimer with COMMD1. May form a homodimer with isoform 1. Interacts with RELA, RELB, NFKB1/p105. Does not interact with NFKBIB. Interacts with CCDC22, CCDC93, SCNN1B, CUL4A.

The protein resides in the nucleus. It is found in the cytoplasm. Its function is as follows. Scaffold protein in the commander complex that is essential for endosomal recycling of transmembrane cargos; the commander complex is composed of the CCC subcomplex and the retriever subcomplex. May modulate activity of cullin-RING E3 ubiquitin ligase (CRL) complexes. Down-regulates activation of NF-kappa-B. Inhibits TNF-induced NFKB1 activation. This chain is COMM domain-containing protein 6 (COMMD6), found in Bos taurus (Bovine).